The chain runs to 352 residues: Biotin synthase (352 aa).

Positions 44–262 (NRVQVSTLLS…LAVARILMPK (219 aa)) constitute a Radical SAM core domain. 3 residues coordinate [4Fe-4S] cluster: Cys-59, Cys-63, and Cys-66. Positions 103, 134, 194, and 266 each coordinate [2Fe-2S] cluster.

It belongs to the radical SAM superfamily. Biotin synthase family. In terms of assembly, homodimer. [4Fe-4S] cluster serves as cofactor. [2Fe-2S] cluster is required as a cofactor.

The catalysed reaction is (4R,5S)-dethiobiotin + (sulfur carrier)-SH + 2 reduced [2Fe-2S]-[ferredoxin] + 2 S-adenosyl-L-methionine = (sulfur carrier)-H + biotin + 2 5'-deoxyadenosine + 2 L-methionine + 2 oxidized [2Fe-2S]-[ferredoxin]. It functions in the pathway cofactor biosynthesis; biotin biosynthesis; biotin from 7,8-diaminononanoate: step 2/2. Functionally, catalyzes the conversion of dethiobiotin (DTB) to biotin by the insertion of a sulfur atom into dethiobiotin via a radical-based mechanism. The chain is Biotin synthase from Pseudomonas putida (strain GB-1).